Reading from the N-terminus, the 321-residue chain is PI-PLC X domain-containing protein 3 (321 aa).

The region spanning 22–197 is the PI-PLC X-box domain; that stretch reads SIHSIPLTNL…DYQVLVFYHS (176 aa). Active-site residues include H37 and H114.

In terms of tissue distribution, widely expressed, with highest levels in brain, followed by heart atrium. Not detected in small intestine, nor stomach.

It localises to the cytoplasm. In Mus musculus (Mouse), this protein is PI-PLC X domain-containing protein 3 (Plcxd3).